Consider the following 938-residue polypeptide: Isoleucine--tRNA ligase (938 aa).

A 'HIGH' region motif is present at residues 58–68; it reads PYANGSIHIGH. Residue K183 is modified to N6-acetyllysine. An L-isoleucyl-5'-AMP-binding site is contributed by E561. Residues 602 to 606 carry the 'KMSKS' region motif; it reads KMSKS. Residue K605 participates in ATP binding. 4 residues coordinate Zn(2+): C901, C904, C921, and C924.

It belongs to the class-I aminoacyl-tRNA synthetase family. IleS type 1 subfamily. In terms of assembly, monomer. It depends on Zn(2+) as a cofactor.

It is found in the cytoplasm. It carries out the reaction tRNA(Ile) + L-isoleucine + ATP = L-isoleucyl-tRNA(Ile) + AMP + diphosphate. Functionally, catalyzes the attachment of isoleucine to tRNA(Ile). As IleRS can inadvertently accommodate and process structurally similar amino acids such as valine, to avoid such errors it has two additional distinct tRNA(Ile)-dependent editing activities. One activity is designated as 'pretransfer' editing and involves the hydrolysis of activated Val-AMP. The other activity is designated 'posttransfer' editing and involves deacylation of mischarged Val-tRNA(Ile). In Escherichia coli O17:K52:H18 (strain UMN026 / ExPEC), this protein is Isoleucine--tRNA ligase.